Consider the following 666-residue polypeptide: Protein-arginine deiminase type-4 (666 aa).

N153, D155, D165, D168, D176, and D179 together coordinate Ca(2+). 2 positions are modified to citrulline: R212 and R218. Q349 contributes to the Ca(2+) binding site. D350 is an active-site residue. Ca(2+) contacts are provided by E351, E353, D369, and S370. 3 positions are modified to citrulline: R372, R374, and R383. Residue R374 participates in substrate binding. The Ca(2+) site is built by F407, L410, and E411. Residues H471, D473, and C648 contribute to the active site.

It belongs to the protein arginine deiminase family. It depends on Ca(2+) as a cofactor. In terms of processing, autocitrullination at Arg-372 and Arg-374 inactivates the enzyme. As to expression, expressed in pluripotent embryonic stem and induced pluripotent stem cells but not multipotent neural stem cells.

It localises to the cytoplasm. The protein resides in the nucleus. Its subcellular location is the cytoplasmic granule. The catalysed reaction is L-arginyl-[protein] + H2O = L-citrullyl-[protein] + NH4(+). Its activity is regulated as follows. Strongly Inhibited by F-amidine and N-alpha-benzoyl-N5-(2-chloro-1-iminoethyl)-L-ornithine amide (Cl-amidine). These inhibitors are however not specific to PADI4 and also inhibit other members of the family. Its function is as follows. Catalyzes the citrullination/deimination of arginine residues of proteins such as histones, thereby playing a key role in histone code and regulation of stem cell maintenance. Citrullinates histone H1 at 'Arg-54' (to form H1R54ci), histone H3 at 'Arg-2', 'Arg-8', 'Arg-17' and/or 'Arg-26' (to form H3R2ci, H3R8ci, H3R17ci, H3R26ci, respectively) and histone H4 at 'Arg-3' (to form H4R3ci). Acts as a key regulator of stem cell maintenance by mediating citrullination of histone H1: citrullination of 'Arg-54' of histone H1 (H1R54ci) results in H1 displacement from chromatin and global chromatin decondensation, thereby promoting pluripotency and stem cell maintenance. Promotes profound chromatin decondensation during the innate immune response to infection in neutrophils by mediating formation of H1R54ci. Required for the formation of neutrophil extracellular traps (NETs); NETs are mainly composed of DNA fibers and are released by neutrophils to bind pathogens during inflammation. Citrullination of histone H3 prevents their methylation by CARM1 and HRMT1L2/PRMT1 and represses transcription. Citrullinates EP300/P300 at 'Arg-2142', which favors its interaction with NCOA2/GRIP1. In Mus musculus (Mouse), this protein is Protein-arginine deiminase type-4 (Padi4).